Here is a 312-residue protein sequence, read N- to C-terminus: Lipid-translocating exporter-like protein RTA1 (312 aa).

The segment at M1–T21 is disordered. A compositionally biased stretch (polar residues) spans H11–T21. The next 6 membrane-spanning stretches (helical) occupy residues I29–A49, L61–C81, F103–G123, A142–V162, F183–Y203, and S223–I243. Residues N258 and N304 are each glycosylated (N-linked (GlcNAc...) asparagine).

It belongs to the lipid-translocating exporter (LTE) (TC 9.A.26.1) family.

It is found in the membrane. The protein operates within siderophore biosynthesis. In terms of biological role, lipid-translocating exporter-like protein; part of the gene cluster that mediates the biosynthesis of hydroxamate-containing siderophores that play a critical role in virulence via intracellular iron acquisition during macrophage infection. This Ajellomyces capsulatus (Darling's disease fungus) protein is Lipid-translocating exporter-like protein RTA1.